We begin with the raw amino-acid sequence, 693 residues long: DNA-directed RNA polymerase subunit beta' (693 aa).

Zn(2+) is bound by residues Cys76, Cys78, Cys94, and Cys97. Mg(2+) is bound by residues Asp496, Asp498, and Asp500.

This sequence belongs to the RNA polymerase beta' chain family. RpoC1 subfamily. In plastids the minimal PEP RNA polymerase catalytic core is composed of four subunits: alpha, beta, beta', and beta''. When a (nuclear-encoded) sigma factor is associated with the core the holoenzyme is formed, which can initiate transcription. The cofactor is Mg(2+). Zn(2+) is required as a cofactor.

It is found in the plastid. It localises to the chloroplast. It carries out the reaction RNA(n) + a ribonucleoside 5'-triphosphate = RNA(n+1) + diphosphate. DNA-dependent RNA polymerase catalyzes the transcription of DNA into RNA using the four ribonucleoside triphosphates as substrates. The protein is DNA-directed RNA polymerase subunit beta' of Nuphar advena (Common spatterdock).